Consider the following 85-residue polypeptide: Hepcidin (85 aa).

Positions 1–24 (MKTFSVAVAVAVVLAFICLQESSA) are cleaved as a signal peptide. Residues 25–64 (VPVTEVQELEEPMSNEYQEMPVESWKMPYNNRHKRHSSPG) constitute a propeptide that is removed on maturation. 4 disulfide bridges follow: Cys-66–Cys-83, Cys-69–Cys-72, Cys-70–Cys-79, and Cys-73–Cys-82.

Predominantly expressed in liver.

It localises to the secreted. Seems to act as a signaling molecule involved in the maintenance of iron homeostasis. Seems to be required in conjunction with HFE to regulate both intestinal iron absorption and iron storage in macrophages. Its function is as follows. Antimicrobial activity against Gram-negative bacteria such as E.coli. This Morone chrysops x Morone saxatilis (White bass x Striped bass) protein is Hepcidin (hamp).